The sequence spans 318 residues: Cytosolic Fe-S cluster assembly factor Nubp1 homolog (318 aa).

Residues 1-15 (MSAPEVENKPADAPE) show a composition bias toward basic and acidic residues. The interval 1-29 (MSAPEVENKPADAPEHCPGTESENAGKAS) is disordered. Residues Cys17, Cys31, Cys34, and Cys40 each contribute to the [4Fe-4S] cluster site. 70-77 (GKGGVGKS) provides a ligand contact to ATP. Residues Cys245 and Cys248 each contribute to the [4Fe-4S] cluster site.

It belongs to the Mrp/NBP35 ATP-binding proteins family. NUBP1/NBP35 subfamily. In terms of assembly, heterotetramer of 2 Nubp1 and 2 Nubp2 chains. Requires [4Fe-4S] cluster as cofactor.

It is found in the cytoplasm. In terms of biological role, component of the cytosolic iron-sulfur (Fe/S) protein assembly (CIA) machinery. Required for maturation of extramitochondrial Fe-S proteins. The Nubp1-Nubp2 heterotetramer forms a Fe-S scaffold complex, mediating the de novo assembly of an Fe-S cluster and its transfer to target apoproteins. The sequence is that of Cytosolic Fe-S cluster assembly factor Nubp1 homolog from Aedes aegypti (Yellowfever mosquito).